The following is a 205-amino-acid chain: MFDKIVIPRQFHHQHKWDKLLSKCPHPGVGFYIIGNKKALSARMRTDWEKVDLLPPVGRMAVDVMKVEISSADRAFMLMFVKACAVFASLHGLYLLNEVYLAASHQKADGKINTTWQLPFVLFLFCCIATTVWILESENGEGDGAPRPACPDFSTRGAETGNQGVQPGAVHGISQREKHVRGDSAQVDFAQAGKSRLEVQVILNF.

A disordered region spans residues 140–168; sequence GEGDGAPRPACPDFSTRGAETGNQGVQPG.

This Homo sapiens (Human) protein is Probable DNA-binding protein.